Consider the following 241-residue polypeptide: Ribonuclease PH (241 aa).

Phosphate-binding positions include Arg86 and 124-126; that span reads GTR.

It belongs to the RNase PH family. As to quaternary structure, homohexameric ring arranged as a trimer of dimers.

It carries out the reaction tRNA(n+1) + phosphate = tRNA(n) + a ribonucleoside 5'-diphosphate. Phosphorolytic 3'-5' exoribonuclease that plays an important role in tRNA 3'-end maturation. Removes nucleotide residues following the 3'-CCA terminus of tRNAs; can also add nucleotides to the ends of RNA molecules by using nucleoside diphosphates as substrates, but this may not be physiologically important. Probably plays a role in initiation of 16S rRNA degradation (leading to ribosome degradation) during starvation. The chain is Ribonuclease PH from Hamiltonella defensa subsp. Acyrthosiphon pisum (strain 5AT).